The primary structure comprises 697 residues: Potassium-transporting ATPase ATP-binding subunit (697 aa).

4 helical membrane passes run 55–75 (PIMF…FLPS), 82–102 (GWFN…ANFA), 245–265 (LTLI…YLGF), and 271–291 (VLVA…LSAI). Asp324 acts as the 4-aspartylphosphate intermediate in catalysis. ATP-binding positions include Asp361, Glu365, 393–400 (FKAETRMS), and Lys412. 2 residues coordinate Mg(2+): Asp535 and Asp539. 3 helical membrane passes run 605-625 (FAII…LNIM), 633-653 (AILS…PLAM), and 677-697 (GGVI…GLFI).

It belongs to the cation transport ATPase (P-type) (TC 3.A.3) family. Type IA subfamily. In terms of assembly, the system is composed of three essential subunits: KdpA, KdpB and KdpC.

It is found in the cell membrane. It carries out the reaction K(+)(out) + ATP + H2O = K(+)(in) + ADP + phosphate + H(+). Part of the high-affinity ATP-driven potassium transport (or Kdp) system, which catalyzes the hydrolysis of ATP coupled with the electrogenic transport of potassium into the cytoplasm. This subunit is responsible for energy coupling to the transport system and for the release of the potassium ions to the cytoplasm. The sequence is that of Potassium-transporting ATPase ATP-binding subunit from Bacillus mycoides (strain KBAB4) (Bacillus weihenstephanensis).